The primary structure comprises 449 residues: Methylenetetrahydrofolate--tRNA-(uracil-5-)-methyltransferase TrmFO (449 aa).

Residue 9–14 (GGGMAG) coordinates FAD.

This sequence belongs to the MnmG family. TrmFO subfamily. It depends on FAD as a cofactor.

The protein resides in the cytoplasm. It carries out the reaction uridine(54) in tRNA + (6R)-5,10-methylene-5,6,7,8-tetrahydrofolate + NADH + H(+) = 5-methyluridine(54) in tRNA + (6S)-5,6,7,8-tetrahydrofolate + NAD(+). It catalyses the reaction uridine(54) in tRNA + (6R)-5,10-methylene-5,6,7,8-tetrahydrofolate + NADPH + H(+) = 5-methyluridine(54) in tRNA + (6S)-5,6,7,8-tetrahydrofolate + NADP(+). Functionally, catalyzes the folate-dependent formation of 5-methyl-uridine at position 54 (M-5-U54) in all tRNAs. This is Methylenetetrahydrofolate--tRNA-(uracil-5-)-methyltransferase TrmFO from Ruegeria pomeroyi (strain ATCC 700808 / DSM 15171 / DSS-3) (Silicibacter pomeroyi).